Reading from the N-terminus, the 136-residue chain is Large ribosomal subunit protein uL16 (136 aa).

The protein belongs to the universal ribosomal protein uL16 family. As to quaternary structure, part of the 50S ribosomal subunit.

Binds 23S rRNA and is also seen to make contacts with the A and possibly P site tRNAs. The polypeptide is Large ribosomal subunit protein uL16 (Glaesserella parasuis serovar 5 (strain SH0165) (Haemophilus parasuis)).